The following is a 429-amino-acid chain: UDP-N-acetylglucosamine 1-carboxyvinyltransferase (429 aa).

Phosphoenolpyruvate is bound at residue 22 to 23; it reads KN. Arginine 93 provides a ligand contact to UDP-N-acetyl-alpha-D-glucosamine. The Proton donor role is filled by cysteine 117. Residue cysteine 117 is modified to 2-(S-cysteinyl)pyruvic acid O-phosphothioketal. UDP-N-acetyl-alpha-D-glucosamine-binding positions include 122-126, aspartate 313, and isoleucine 335; that span reads RPVDQ.

Belongs to the EPSP synthase family. MurA subfamily.

The protein resides in the cytoplasm. The enzyme catalyses phosphoenolpyruvate + UDP-N-acetyl-alpha-D-glucosamine = UDP-N-acetyl-3-O-(1-carboxyvinyl)-alpha-D-glucosamine + phosphate. It participates in cell wall biogenesis; peptidoglycan biosynthesis. Its function is as follows. Cell wall formation. Adds enolpyruvyl to UDP-N-acetylglucosamine. The protein is UDP-N-acetylglucosamine 1-carboxyvinyltransferase of Variovorax paradoxus (strain S110).